We begin with the raw amino-acid sequence, 209 residues long: Glutathione S-transferase 1-1 (209 aa).

Positions 1 to 81 constitute a GST N-terminal domain; that stretch reads MADFYYLPGS…YLVEKYGKTD (81 aa). Glutathione-binding positions include 51-53 and 65-67; these read HTI and ESR. Residues 87 to 209 enclose the GST C-terminal domain; that stretch reads CPKKRAVINQ…GCLEFKKYFE (123 aa).

This sequence belongs to the GST superfamily. Theta family. As to quaternary structure, homodimer.

It carries out the reaction RX + glutathione = an S-substituted glutathione + a halide anion + H(+). Functionally, conjugation of reduced glutathione to a wide number of exogenous and endogenous hydrophobic electrophiles. This is Glutathione S-transferase 1-1 (GstD1) from Drosophila yakuba (Fruit fly).